The sequence spans 273 residues: Urease accessory protein UreD (273 aa).

Belongs to the UreD family. UreD, UreF and UreG form a complex that acts as a GTP-hydrolysis-dependent molecular chaperone, activating the urease apoprotein by helping to assemble the nickel containing metallocenter of UreC. The UreE protein probably delivers the nickel.

The protein resides in the cytoplasm. Functionally, required for maturation of urease via the functional incorporation of the urease nickel metallocenter. In Rhizobium johnstonii (strain DSM 114642 / LMG 32736 / 3841) (Rhizobium leguminosarum bv. viciae), this protein is Urease accessory protein UreD.